A 135-amino-acid chain; its full sequence is Methylglyoxal synthase (135 aa).

The MGS-like domain occupies 1 to 135 (MQKTLALVAH…GLYERAVPEF (135 aa)). Substrate-binding positions include His10, Lys14, 36 to 39 (TGTT), and 56 to 57 (SG). Catalysis depends on Asp62, which acts as the Proton donor/acceptor. His89 contacts substrate.

The protein belongs to the methylglyoxal synthase family.

It catalyses the reaction dihydroxyacetone phosphate = methylglyoxal + phosphate. Its function is as follows. Catalyzes the formation of methylglyoxal from dihydroxyacetone phosphate. The protein is Methylglyoxal synthase of Pseudoalteromonas atlantica (strain T6c / ATCC BAA-1087).